Here is a 162-residue protein sequence, read N- to C-terminus: Caveolin-2 (162 aa).

Residues 1–86 (MGLETEKADV…FEISKYIIYK (86 aa)) lie on the Cytoplasmic side of the membrane. Y19 bears the Phosphotyrosine; by SRC mark. Phosphoserine occurs at positions 20 and 23. A Phosphotyrosine; by SRC modification is found at Y27. Residues 87-107 (FLTVFLAIPLAFAAGILFATL) constitute an intramembrane region (helical). Residues 108-162 (SCLHIWITMPFVKTCLMVLPSVQTIWKSVTDVAIAPLCTSVGRSFSSVSLQLSHD) are Cytoplasmic-facing.

Belongs to the caveolin family. Monomer or homodimer. Interacts with CAV1; the interaction forms a stable heterooligomeric complex that is required for targeting to lipid rafts and for caveolae formation. Tyrosine phosphorylated forms do not form heterooligomers with the Tyr-19-phosphorylated form existing as a monomer or dimer, and the Tyr-27-form as a monomer only. Interacts (tyrosine phosphorylated form) with the SH2 domain-containing proteins, RASA1, NCK1 and SRC. Interacts (tyrosine phosphorylated form) with INSR, the interaction (Tyr-27-phosphorylated form) is increased on insulin stimulation. Interacts (Tyr-19 phosphorylated form) with MAPK1 (phosphorylated form); the interaction, promoted by insulin, leads to nuclear location and MAPK1 activation. Interacts with STAT3; the interaction is increased on insulin-induced tyrosine phosphorylation leading to STAT activation. In terms of processing, phosphorylated on serine and tyrosine residues. CAV1 promotes phosphorylation on Ser-23 which then targets the complex to the plasma membrane, lipid rafts and caveolae. Phosphorylation on both Tyr-19 and Tyr-27 is required for insulin-induced 'Ser-727' phosphorylation of STAT3 and its activation. Phosphorylation on Tyr-19 is required for insulin-induced phosphorylation of MAPK1 and DNA binding of STAT3. Tyrosine phosphorylation is induced by both EGF and insulin.

Its subcellular location is the nucleus. The protein localises to the cytoplasm. It is found in the golgi apparatus membrane. It localises to the cell membrane. The protein resides in the membrane. Its subcellular location is the caveola. Functionally, may act as a scaffolding protein within caveolar membranes. Interacts directly with G-protein alpha subunits and can functionally regulate their activity. Acts as an accessory protein in conjunction with CAV1 in targeting to lipid rafts and driving caveolae formation. Positive regulator of cellular mitogenesis of the MAPK signaling pathway. Required for the insulin-stimulated nuclear translocation and activation of MAPK1 and STAT3, and the subsequent regulation of cell cycle progression. The polypeptide is Caveolin-2 (CAV2) (Dasypus novemcinctus (Nine-banded armadillo)).